The primary structure comprises 225 residues: NAD(P)H-quinone oxidoreductase subunit K, chloroplastic (225 aa).

C43, C44, C108, and C139 together coordinate [4Fe-4S] cluster.

It belongs to the complex I 20 kDa subunit family. NDH is composed of at least 16 different subunits, 5 of which are encoded in the nucleus. The cofactor is [4Fe-4S] cluster.

The protein resides in the plastid. The protein localises to the chloroplast thylakoid membrane. The enzyme catalyses a plastoquinone + NADH + (n+1) H(+)(in) = a plastoquinol + NAD(+) + n H(+)(out). The catalysed reaction is a plastoquinone + NADPH + (n+1) H(+)(in) = a plastoquinol + NADP(+) + n H(+)(out). In terms of biological role, NDH shuttles electrons from NAD(P)H:plastoquinone, via FMN and iron-sulfur (Fe-S) centers, to quinones in the photosynthetic chain and possibly in a chloroplast respiratory chain. The immediate electron acceptor for the enzyme in this species is believed to be plastoquinone. Couples the redox reaction to proton translocation, and thus conserves the redox energy in a proton gradient. The polypeptide is NAD(P)H-quinone oxidoreductase subunit K, chloroplastic (Helianthus annuus (Common sunflower)).